We begin with the raw amino-acid sequence, 693 residues long: Elongation factor G (693 aa).

The 275-residue stretch at 8-282 (AKTRNIGIMA…AVIDYLPSPL (275 aa)) folds into the tr-type G domain. Residues 17-24 (AHVDAGKT), 81-85 (DTPGH), and 135-138 (NKMD) each bind GTP.

It belongs to the TRAFAC class translation factor GTPase superfamily. Classic translation factor GTPase family. EF-G/EF-2 subfamily.

The protein localises to the cytoplasm. Catalyzes the GTP-dependent ribosomal translocation step during translation elongation. During this step, the ribosome changes from the pre-translocational (PRE) to the post-translocational (POST) state as the newly formed A-site-bound peptidyl-tRNA and P-site-bound deacylated tRNA move to the P and E sites, respectively. Catalyzes the coordinated movement of the two tRNA molecules, the mRNA and conformational changes in the ribosome. The sequence is that of Elongation factor G from Streptococcus thermophilus (strain CNRZ 1066).